The primary structure comprises 192 residues: Acetolactate synthase small subunit (192 aa).

Residues 29-103 (IITVKVRNEM…DTLKVSDLTD (75 aa)) form the ACT domain.

The protein belongs to the acetolactate synthase small subunit family. As to quaternary structure, dimer of large and small chains.

It carries out the reaction 2 pyruvate + H(+) = (2S)-2-acetolactate + CO2. It functions in the pathway amino-acid biosynthesis; L-isoleucine biosynthesis; L-isoleucine from 2-oxobutanoate: step 1/4. It participates in amino-acid biosynthesis; L-valine biosynthesis; L-valine from pyruvate: step 1/4. The chain is Acetolactate synthase small subunit (ilvH) from Aquifex aeolicus (strain VF5).